Here is a 309-residue protein sequence, read N- to C-terminus: Protein CbbX (309 aa).

74–81 is a binding site for ATP; the sequence is GNPGTGKT.

The protein belongs to the CbxX/CfxQ family. As to quaternary structure, forms homohexameric rings. The oligomeric transition is triggered by ribulose 1,5-biphosphate.

Its function is as follows. ATPase involved in the activation of red-type RuBisCo (ribulose-1,5-bisphosphate carboxylase/oxygenase), which tends to form inactive complexes with its substrate ribulose 1,5-bisphosphate (RuBP). Catalyzes the release of RuBP from inhibited RuBisCo in an ATP-dependent manner. Activation of RuBisCO involves the ATP-dependent carboxylation of the epsilon-amino group of lysine leading to a carbamate structure. The sequence is that of Protein CbbX (cbbX) from Cereibacter sphaeroides (Rhodobacter sphaeroides).